A 458-amino-acid chain; its full sequence is Brassinosteroid-related acyltransferase 1 (458 aa).

His-164 (proton acceptor) is an active-site residue.

The protein belongs to the plant acyltransferase family. As to expression, highly expressed in young tissues and vascular bundles. Mostly expressed in young leaves, primary roots, flowers (including petals and sepals), and siliques.

It is found in the endoplasmic reticulum. The protein localises to the nucleus. It functions in the pathway plant hormone biosynthesis; brassinosteroid biosynthesis. Brassinosteroids (BR) acyltransferase with acyl-CoA ligase activity toward brassinolide (BL), castasterone (CS), typhasterol (TY), 6-deoxotyphasterol (6-deoxoTY), and 6-deoxocastasterone (6-deoxoCS) and thus converts them to corresponding lauroyl esters. Regulates BR homeostasis and promotes BR-mediated cell growth regulation. Involved in vascular bundle development. This chain is Brassinosteroid-related acyltransferase 1, found in Arabidopsis thaliana (Mouse-ear cress).